The primary structure comprises 142 residues: Large ribosomal subunit protein uL16 (142 aa).

A compositionally biased stretch (basic residues) spans 1–14; it reads MLSPRRTKFRKQQR. Positions 1–22 are disordered; that stretch reads MLSPRRTKFRKQQRGRMTGKAT.

Belongs to the universal ribosomal protein uL16 family. In terms of assembly, part of the 50S ribosomal subunit.

In terms of biological role, binds 23S rRNA and is also seen to make contacts with the A and possibly P site tRNAs. In Synechococcus elongatus (strain ATCC 33912 / PCC 7942 / FACHB-805) (Anacystis nidulans R2), this protein is Large ribosomal subunit protein uL16.